Reading from the N-terminus, the 147-residue chain is Heavy metal-associated isoprenylated plant protein 27 (147 aa).

Residues phenylalanine 18 to glutamate 82 form the HMA domain. 2 residues coordinate a metal cation: cysteine 29 and cysteine 32. Cysteine 144 bears the Cysteine methyl ester mark. The S-farnesyl cysteine moiety is linked to residue cysteine 144. A propeptide spans threonine 145–methionine 147 (removed in mature form).

This sequence belongs to the HIPP family. As to quaternary structure, interacts with UBP16. Interacts with ZHD11/HB29.

Its subcellular location is the membrane. Functionally, heavy-metal-binding protein. Binds cadmium. May be involved in cadmium transport and play a role in cadmium detoxification. This chain is Heavy metal-associated isoprenylated plant protein 27, found in Arabidopsis thaliana (Mouse-ear cress).